We begin with the raw amino-acid sequence, 506 residues long: (+)-vincadifformine 19-hydroxylase (506 aa).

The Lumenal portion of the chain corresponds to 1-4 (MELD). A helical membrane pass occupies residues 5 to 25 (ECSPSIFIISFIFIAISIAIL). Over 26-506 (RRIRPKKTKA…DLHLIPTSYM (481 aa)) the chain is Cytoplasmic. Residue Cys450 participates in heme binding.

It belongs to the cytochrome P450 family. It depends on heme as a cofactor. Accumulates progressively in roots.

Its subcellular location is the endoplasmic reticulum membrane. The catalysed reaction is (+)-vincadifformine + reduced [NADPH--hemoprotein reductase] + O2 = (+)-minovincinine + oxidized [NADPH--hemoprotein reductase] + H2O + H(+). Its pathway is alkaloid biosynthesis. Its activity is regulated as follows. The enantiomer (-)-vincadifformine acts as a competitive inhibitor. Functionally, component of the monoterpenoid indole alkaloids (MIAs, e.g. echitovenine, tabersonine, lochnericine, 19-hydroxytabersonine and horhammericine) biosynthetic pathway; MIAs are used in cancer treatment and other medical applications. Cytochrome P450 catalyzing the hydroxylation of (+)-vincadifformine to (+)-minovincinine. The protein is (+)-vincadifformine 19-hydroxylase of Catharanthus roseus (Madagascar periwinkle).